A 331-amino-acid polypeptide reads, in one-letter code: Homoserine kinase (331 aa).

Belongs to the pseudomonas-type ThrB family.

It carries out the reaction L-homoserine + ATP = O-phospho-L-homoserine + ADP + H(+). The protein operates within amino-acid biosynthesis; L-threonine biosynthesis; L-threonine from L-aspartate: step 4/5. This Paraburkholderia phytofirmans (strain DSM 17436 / LMG 22146 / PsJN) (Burkholderia phytofirmans) protein is Homoserine kinase.